Consider the following 270-residue polypeptide: Flavodoxin/ferredoxin--NADP reductase (270 aa).

Residues 12–113 (VLPDAQTVTS…PKPVGTLVID (102 aa)) enclose the FAD-binding FR-type domain. FAD is bound by residues 62-65 (RAYS), 78-80 (YSI), and 86-88 (PLT). T126 provides a ligand contact to NADP(+). An FAD-binding site is contributed by T128. Residues R156, 192–193 (TR), R201, and D238 each bind NADP(+). FAD is bound at residue 264-270 (AFVGEGI).

The protein belongs to the ferredoxin--NADP reductase type 1 family. As to quaternary structure, monomer. Requires FAD as cofactor.

It localises to the cytoplasm. It catalyses the reaction 2 reduced [2Fe-2S]-[ferredoxin] + NADP(+) + H(+) = 2 oxidized [2Fe-2S]-[ferredoxin] + NADPH. The catalysed reaction is reduced [flavodoxin] + NADP(+) = oxidized [flavodoxin] + NADPH + 2 H(+). In terms of biological role, transports electrons between flavodoxin or ferredoxin and NADPH. The sequence is that of Flavodoxin/ferredoxin--NADP reductase from Rhodobacter capsulatus (Rhodopseudomonas capsulata).